The following is a 356-amino-acid chain: CX3C chemokine receptor 1 (356 aa).

Topologically, residues 1 to 26 (MTTLYSDWATESFEYDESSEACFIGD) are extracellular. The helical transmembrane segment at 27 to 47 (IVAFGTIFLSIFYSLVFAFGL) threads the bilayer. At 48-68 (VGNLLVVCALTSSRKPKSITD) the chain is on the cytoplasmic side. A helical transmembrane segment spans residues 69-89 (IYLLNLALSDLLFVATLPFWT). Over 90–105 (HYVISEQGFHNAVCKL) the chain is Extracellular. C103 and C176 are disulfide-bonded. A helical transmembrane segment spans residues 106–126 (TTALFFIGFFGGIFFITVISI). The Cytoplasmic segment spans residues 127 to 147 (DRYMAIVLAANSINNRTVQHG). The chain crosses the membrane as a helical span at residues 148 to 168 (VTTSLGVWAAAILVAAPQFMF). Residues 169-195 (TKQKGNECLGDYPEVLQDIWPVLRNTE) are Extracellular-facing. Residues 196 to 216 (ANFLGFLLPVLIMSYCYFRII) form a helical membrane-spanning segment. Residues 217 to 232 (QTLFSCKNHKKAKAIK) are Cytoplasmic-facing. Residues 233–253 (LILLVVIVFFLFWTPYNVMIF) traverse the membrane as a helical segment. The Extracellular segment spans residues 254–277 (LETLKLYGFFPNCDMKRDLRLALS). The chain crosses the membrane as a helical span at residues 278-298 (VTETVAFSHCCLNPLIYAFAG). Over 299-356 (QKFRRYLRHLSRKCQAVLCGRPVHVSFSPSESQRSRQESIVSSNFTHYTSDGDASLLL) the chain is Cytoplasmic. The residue at position 347 (T347) is a Phosphothreonine.

Belongs to the G-protein coupled receptor 1 family. As to quaternary structure, found in a ternary complex with CX3CL1 and ITGAV:ITGB3 or ITGA4:ITGB1. Post-translationally, this protein is not N-glycosylated which is unusual for G-protein-coupled receptors.

The protein resides in the cell membrane. Its function is as follows. Receptor for the C-X3-C chemokine fractalkine (CX3CL1) present on many early leukocyte cells; CX3CR1-CX3CL1 signaling exerts distinct functions in different tissue compartments, such as immune response, inflammation, cell adhesion and chemotaxis. CX3CR1-CX3CL1 signaling mediates cell migratory functions. Responsible for the recruitment of natural killer (NK) cells to inflamed tissues. Acts as a regulator of inflammation process leading to atherogenesis by mediating macrophage and monocyte recruitment to inflamed atherosclerotic plaques, promoting cell survival. Involved in airway inflammation by promoting interleukin 2-producing T helper (Th2) cell survival in inflamed lung. Involved in the migration of circulating monocytes to non-inflamed tissues, where they differentiate into macrophages and dendritic cells. Acts as a negative regulator of angiogenesis, probably by promoting macrophage chemotaxis. Plays a key role in brain microglia by regulating inflammatory response in the central nervous system (CNS) and regulating synapse maturation. Required to restrain the microglial inflammatory response in the CNS and the resulting parenchymal damage in response to pathological stimuli. Involved in brain development by participating in synaptic pruning, a natural process during which brain microglia eliminates extra synapses during postnatal development. Synaptic pruning by microglia is required to promote the maturation of circuit connectivity during brain development. Acts as an important regulator of the gut microbiota by controlling immunity to intestinal bacteria and fungi. Expressed in lamina propria dendritic cells in the small intestine, which form transepithelial dendrites capable of taking up bacteria in order to provide defense against pathogenic bacteria. Required to initiate innate and adaptive immune responses against dissemination of commensal fungi (mycobiota) component of the gut: expressed in mononuclear phagocytes (MNPs) and acts by promoting induction of antifungal IgG antibodies response to confer protection against disseminated C.albicans or C.auris infection. Also acts as a receptor for C-C motif chemokine CCL26, inducing cell chemotaxis. The protein is CX3C chemokine receptor 1 of Oryctolagus cuniculus (Rabbit).